Reading from the N-terminus, the 99-residue chain is Essential MCU regulator, mitochondrial (99 aa).

The transit peptide at Met1–Thr39 directs the protein to the mitochondrion. Residues Ala40 to Phe57 lie on the Mitochondrial matrix side of the membrane. Residues Gly58–Ser77 form a helical membrane-spanning segment. Residues Lys78–Asp99 are Mitochondrial intermembrane-facing.

Belongs to the SMDT1/EMRE family. In terms of assembly, component of the uniplex complex.

It localises to the mitochondrion inner membrane. Essential regulatory subunit of the mitochondrial calcium uniporter complex (uniplex), a complex that mediates calcium uptake into mitochondria. Required to bridge the calcium-sensing proteins micu1 with the calcium-conducting subunit mcu. Acts by mediating activation of mcu and retention of micu1 to the mcu pore, in order to ensure tight regulation of the uniplex complex and appropriate responses to intracellular calcium signaling. The polypeptide is Essential MCU regulator, mitochondrial (Xenopus tropicalis (Western clawed frog)).